The sequence spans 516 residues: Putative transposase y4bL/y4kJ/y4tB (516 aa).

An HTH IS408-type domain is found at 15–96; the sequence is IRTILRLTHE…PDWALVVREL (82 aa). The region spanning 138–319 is the Integrase catalytic domain; sequence FRNRHAAGAV…SRRELFEEIE (182 aa). The segment at 493–516 is disordered; that stretch reads ERPQAEHAAPTPAHTNIRGRSYYQ.

Belongs to the transposase IS21/IS408/IS1162 family.

This chain is Putative transposase y4bL/y4kJ/y4tB, found in Sinorhizobium fredii (strain NBRC 101917 / NGR234).